Here is a 105-residue protein sequence, read N- to C-terminus: Small ribosomal subunit protein uS10 (105 aa).

This sequence belongs to the universal ribosomal protein uS10 family. As to quaternary structure, part of the 30S ribosomal subunit.

In terms of biological role, involved in the binding of tRNA to the ribosomes. This is Small ribosomal subunit protein uS10 from Agathobacter rectalis (strain ATCC 33656 / DSM 3377 / JCM 17463 / KCTC 5835 / VPI 0990) (Eubacterium rectale).